The chain runs to 204 residues: UPF0056 membrane protein TC_0241 (204 aa).

Helical transmembrane passes span 8 to 28 (LTLL…FVAL), 46 to 66 (IFAL…FRLL), 68 to 88 (VSLP…AINM), 107 to 127 (IFYP…STLG), 138 to 158 (LVLG…FFSS), and 176 to 196 (FGIS…STAF).

The protein belongs to the UPF0056 (MarC) family.

The protein resides in the cell membrane. This Chlamydia muridarum (strain MoPn / Nigg) protein is UPF0056 membrane protein TC_0241.